A 180-amino-acid chain; its full sequence is Nucleoside triphosphate/diphosphate phosphatase (180 aa).

Catalysis depends on Arg26, which acts as the Proton donor. Mg(2+)-binding residues include Asn90, Asp106, Asp108, Asp110, Asp123, and Glu126.

It belongs to the Ntdp family. The cofactor is Mg(2+).

It catalyses the reaction a ribonucleoside 5'-triphosphate + H2O = a ribonucleoside 5'-diphosphate + phosphate + H(+). The catalysed reaction is a ribonucleoside 5'-diphosphate + H2O = a ribonucleoside 5'-phosphate + phosphate + H(+). Has nucleoside phosphatase activity towards nucleoside triphosphates and nucleoside diphosphates. The protein is Nucleoside triphosphate/diphosphate phosphatase of Staphylococcus aureus (strain MSSA476).